A 911-amino-acid polypeptide reads, in one-letter code: Protein translocase subunit SecA (911 aa).

ATP is bound by residues Gln-87, 105–109 (GEGKT), and Asp-512. A compositionally biased stretch (basic and acidic residues) spans 561 to 571 (RHESRRIDNQL). The disordered stretch occupies residues 561–583 (RHESRRIDNQLRGRSGRQGDPGS). Cys-895, Cys-897, Cys-906, and His-907 together coordinate Zn(2+).

This sequence belongs to the SecA family. In terms of assembly, monomer and homodimer. Part of the essential Sec protein translocation apparatus which comprises SecA, SecYEG and auxiliary proteins SecDF-YajC and YidC. Zn(2+) serves as cofactor.

The protein localises to the cell inner membrane. Its subcellular location is the cytoplasm. The catalysed reaction is ATP + H2O + cellular proteinSide 1 = ADP + phosphate + cellular proteinSide 2.. Part of the Sec protein translocase complex. Interacts with the SecYEG preprotein conducting channel. Has a central role in coupling the hydrolysis of ATP to the transfer of proteins into and across the cell membrane, serving both as a receptor for the preprotein-SecB complex and as an ATP-driven molecular motor driving the stepwise translocation of polypeptide chains across the membrane. The chain is Protein translocase subunit SecA from Pseudomonas putida (strain W619).